The chain runs to 249 residues: Electron transfer flavoprotein subunit beta (249 aa).

It belongs to the ETF beta-subunit/FixA family. Heterodimer of an alpha and a beta subunit. Requires FAD as cofactor. AMP serves as cofactor.

In terms of biological role, the electron transfer flavoprotein serves as a specific electron acceptor for other dehydrogenases. It transfers the electrons to the main respiratory chain via ETF-ubiquinone oxidoreductase (ETF dehydrogenase). The sequence is that of Electron transfer flavoprotein subunit beta (etfB) from Pseudomonas aeruginosa (strain ATCC 15692 / DSM 22644 / CIP 104116 / JCM 14847 / LMG 12228 / 1C / PRS 101 / PAO1).